We begin with the raw amino-acid sequence, 219 residues long: Probable nicotinate-nucleotide adenylyltransferase (219 aa).

Belongs to the NadD family.

The catalysed reaction is nicotinate beta-D-ribonucleotide + ATP + H(+) = deamido-NAD(+) + diphosphate. It participates in cofactor biosynthesis; NAD(+) biosynthesis; deamido-NAD(+) from nicotinate D-ribonucleotide: step 1/1. Catalyzes the reversible adenylation of nicotinate mononucleotide (NaMN) to nicotinic acid adenine dinucleotide (NaAD). In Pseudomonas entomophila (strain L48), this protein is Probable nicotinate-nucleotide adenylyltransferase.